Consider the following 318-residue polypeptide: D-alanine--D-alanine ligase B (318 aa).

The ATP-grasp domain occupies 116–311 (KQVWQSLGIP…FQQLVLAILA (196 aa)). 142-197 (STELGFPLIVKPAHEGSSIGMAKVNSTQELVAAWQDAAKYDSQVLVEQWIHGPEFT) is a binding site for ATP. Positions 265, 278, and 280 each coordinate Mg(2+).

Belongs to the D-alanine--D-alanine ligase family. The cofactor is Mg(2+). Mn(2+) serves as cofactor.

It localises to the cytoplasm. The enzyme catalyses 2 D-alanine + ATP = D-alanyl-D-alanine + ADP + phosphate + H(+). The protein operates within cell wall biogenesis; peptidoglycan biosynthesis. Functionally, cell wall formation. In Pseudomonas putida (strain ATCC 47054 / DSM 6125 / CFBP 8728 / NCIMB 11950 / KT2440), this protein is D-alanine--D-alanine ligase B.